A 563-amino-acid chain; its full sequence is MTVQEFDVVVVGSGAAGMVAALVAAHRGLSTVVVEKAPHYGGSTARSGGGVWIPNNEVLKRRGVRDTPEAARTYLHGIVGEIVEPERIDAYLDRGPEMLSFVLKHTPLKMCWVPGYSDYYPEAPGGRPGGRSIEPKPFNARKLGADMAGLEPAYGKVPLNVVVMQQDYVRLNQLKRHPRGVLRSMKVGARTMWAKATGKNLVGMGRALIGPLRIGLQRAGVPVELNTAFTDLFVENGVVSGVYVRDSHEAESAEPQLIRARRGVILACGGFEHNEQMRIKYQRAPITTEWTVGASANTGDGILAAEKLGAALDLMDDAWWGPTVPLVGKPWFALSERNSPGSIIVNMSGKRFMNESMPYVEACHHMYGGEHGQGPGPGENIPAWLVFDQRYRDRYIFAGLQPGQRIPSRWLDSGVIVQADTLAELAGKAGLPADELTATVQRFNAFARSGVDEDYHRGESAYDRYYGDPSNKPNPNLGEVGHPPYYGAKMVPGDLGTKGGIRTDVNGRALRDDGSIIDGLYAAGNVSAPVMGHTYPGPGGTIGPAMTFGYLAALHIADQAGKR.

7–36 (DVVVVGSGAAGMVAALVAAHRGLSTVVVEK) is an FAD binding site.

Belongs to the FAD-dependent oxidoreductase 2 family. 3-oxosteroid dehydrogenase subfamily. Requires FAD as cofactor.

It carries out the reaction a 3-oxosteroid + A = a 3-oxo-Delta(1)-steroid + AH2. The catalysed reaction is a 3-oxo-Delta(4)-steroid + A = a 3-oxo-Delta(1,4)-steroid + AH2. The enzyme catalyses 3-oxochol-4-en-22-oyl-CoA + NAD(+) = 3-oxochola-1,4-dien-22-oyl-CoA + NADH + H(+). Involved in the degradation of cholesterol. Catalyzes the elimination of the C-1 and C-2 hydrogen atoms of the A-ring from the polycyclic ring structure of 3-ketosteroids. Has a clear preference for 3-ketosteroids with a saturated A-ring, displaying highest activity on 5alpha-AD (5alpha-androstane-3,17-dione) and 5alpha-T (5alpha-testosterone, also known as 17beta-hydroxy-5alpha-androstane-3-one). Is also involved in the formation of 3-keto-1,4-diene-steroid from 3-keto-4-ene-steroid. Catalyzes the conversion of 3-oxo-23,24-bisnorchol-4-en-22-oyl-coenzyme A thioester (4-BNC-CoA) to 3-oxo-23,24-bisnorchola-1,4-dien-22-oyl-coenzyme A thioester (1,4-BNC-CoA). This Mycobacterium tuberculosis (strain ATCC 25618 / H37Rv) protein is 3-oxosteroid 1-dehydrogenase (kstD).